The following is a 595-amino-acid chain: Threonine dehydratase 2 biosynthetic, chloroplastic (595 aa).

The N-terminal 51 residues, 1–51 (MEFLCLAPTRSFSTNPKLTKSIPSDHTSTTSRIFTYQNMRGSTMRPLALPL), are a transit peptide targeting the chloroplast. K143 bears the N6-(pyridoxal phosphate)lysine mark. ACT-like domains lie at 420 to 492 (ALLA…NLSH) and 514 to 585 (IFGE…LDNY).

This sequence belongs to the serine/threonine dehydratase family. As to quaternary structure, homotetramer. Pyridoxal 5'-phosphate is required as a cofactor. Proteolytically cleaved by a chymotrypsin-like digestive protease in the midgut of the lepidopteran insects to remove the C-terminal regulatory domain, which allows efficient metabolizing of threonine in the presence of high isoleucine levels in the gut. As to expression, expressed in floral buds, 8-9 mm long flowers 1 to 2 days before anthesis, open flowers and floral organs including sepals, petals, stamens and carpels of 8-9 mm flowers (at protein level). Expressed in very early floral meristems of the anantha. Over 500-fold expression in mature flowers compared to leaves. Expressed in sepals, petals, stamens and carpels of the mature flower. In sepals, mostly expressed in the abaxial mesophyll cells and in petals in parenchymal cells. Not expressed in epidermal or vascular tissues of sepals and petals. In stamens, expressed in parenchymal cells of the connective and lobes, but not expressed in differentiated tissues such as tapetum (TP), stomium (SM), or pollen grains (PG). Not expressed in roots or seeds. High level of expression in immature flower buds, unopened flowers and opened flowers. Not expressed in unstressed leaves, root, stem or petiole.

The protein localises to the plastid. The protein resides in the chloroplast. The enzyme catalyses L-threonine = 2-oxobutanoate + NH4(+). The catalysed reaction is L-serine = pyruvate + NH4(+). The protein operates within amino-acid biosynthesis; L-isoleucine biosynthesis; 2-oxobutanoate from L-threonine: step 1/1. Its activity is regulated as follows. Threonine dehydratase 2 biosynthetic, chloroplastic: Strongly inhibited by 1 mM isoleucine. Processed threonine dehydratase 2: Not inhibited by isoleucine. In terms of biological role, not required for normal growth and development of the plant. Involved in defense against lepidopteran, but not coleopteran herbivore insects. Acts in the insect gut to degrade threonine, which is an essential and limiting nutrient for the growth of lepidopteran larvae. Active against both L-threonine and L-serine. In Solanum lycopersicum (Tomato), this protein is Threonine dehydratase 2 biosynthetic, chloroplastic.